The sequence spans 493 residues: uncharacterized protein (493 aa).

8–37 (DFLVVGGGTCGCVVAARLSEDPSATVMLLE) lines the FAD pocket. The active-site Proton acceptor is His429.

The protein belongs to the GMC oxidoreductase family. It depends on FAD as a cofactor.

This is an uncharacterized protein from Rhodococcus erythropolis (Arthrobacter picolinophilus).